The sequence spans 3396 residues: Versican core protein (3396 aa).

The N-terminal stretch at 1-20 (MFINIKSILWMCSTLIVTHA) is a signal peptide. In terms of domain architecture, Ig-like V-type spans 21–146 (LHKVKVGKSP…EDTQDTVSLT (126 aa)). 5 disulfides stabilise this stretch: Cys-44–Cys-130, Cys-172–Cys-243, Cys-196–Cys-217, Cys-270–Cys-345, and Cys-294–Cys-315. The N-linked (GlcNAc...) asparagine glycan is linked to Asn-57. 2 consecutive Link domains span residues 150-245 (VVFH…YCYV) and 251-347 (DVFH…YCFK). Asn-330 carries N-linked (GlcNAc...) asparagine glycosylation. The tract at residues 348 to 1335 (PKEATTIDLS…IIEVRENKTG (988 aa)) is GAG-alpha (glucosaminoglycan attachment domain). Positions 420 to 430 (ATKLPTPTGST) are enriched in polar residues. Disordered stretches follow at residues 420–439 (ATKLPTPTGSTKKPWDMDDY) and 603–622 (STTVSPLIMPDNNGSSMDDW). Residue Asn-615 is glycosylated (N-linked (GlcNAc...) asparagine). An O-linked (Xyl...) (chondroitin sulfate) serine glycan is attached at Ser-659. Asn-782 and Asn-809 each carry an N-linked (GlcNAc...) asparagine glycan. Disordered stretches follow at residues 807–829 (EDNTTSKPLESTEPSASSKLPPA), 1126–1154 (IGPKVSLSPGPEQKYETEGSSTTGFTSSL), and 1277–1316 (REYFTTSSPPATQPTRPPTVEDKEAFGPQALSTPQPPAST). Over residues 811-824 (TSKPLESTEPSASS) the composition is skewed to polar residues. The span at 1143–1154 (EGSSTTGFTSSL) shows a compositional bias: low complexity. 2 N-linked (GlcNAc...) asparagine glycosylation sites follow: Asn-1332 and Asn-1398. Residues 1336-3089 (RMSDLSVIGH…VEGTAIYLPG (1754 aa)) are GAG-beta. Disordered stretches follow at residues 1420–1497 (VPKD…SGGE) and 1510–1539 (FESGTAKKGAESVTERDTEVGHQAHEHTEP). Positions 1422–1433 (KDPEAAEARRGQ) are enriched in basic and acidic residues. Residues Asn-1442 and Asn-1468 are each glycosylated (N-linked (GlcNAc...) asparagine). Residues 1469–1480 (ESTETTESLEVT) show a composition bias toward low complexity. The segment covering 1517-1538 (KGAESVTERDTEVGHQAHEHTE) has biased composition (basic and acidic residues). 2 O-linked (Xyl...) (chondroitin sulfate) serine glycosylation sites follow: Ser-1548 and Ser-1631. An N-linked (GlcNAc...) asparagine glycan is attached at Asn-1663. Disordered regions lie at residues 1717–1737 (STTVEEKKRKEEEGTTGTAST) and 1759–1789 (PNVATSSDSGTRKSFMSLTTPTQSEREMTDS). Over residues 1720 to 1729 (VEEKKRKEEE) the composition is skewed to basic and acidic residues. Over residues 1760-1781 (NVATSSDSGTRKSFMSLTTPTQ) the composition is skewed to polar residues. The N-linked (GlcNAc...) asparagine glycan is linked to Asn-1898. Ser-1935 and Ser-1959 each carry an O-linked (Xyl...) (chondroitin sulfate) serine glycan. Disordered regions lie at residues 1962–1994 (AAFRDTQTSPSTVPTSVHISHISDSEGPSSTMV), 2107–2134 (RQEIESETTSEEQIQEEKSFESPQNSPA), and 2168–2188 (KEMKEEDTSLVNMSTPDPDAN). Positions 1969-1978 (TSPSTVPTSV) are enriched in low complexity. Positions 2111–2120 (ESETTSEEQI) are enriched in acidic residues. Ser-2116 is subject to Phosphoserine; by FAM20C. The N-linked (GlcNAc...) asparagine glycan is linked to Asn-2179. Ser-2247 and Ser-2254 each carry an O-linked (Xyl...) (chondroitin sulfate) serine glycan. N-linked (GlcNAc...) asparagine glycosylation is found at Asn-2272, Asn-2280, Asn-2360, Asn-2385, and Asn-2392. 4 disordered regions span residues 2371-2396 (TSRPQTITEQDSNKNSSTAEINETTT), 2445-2473 (SATTQATRQESSTTFVSDGSLEKHPEVPS), 2493-2518 (SEQNKSSPDPTSTLSNTVSYERSTDG), and 2598-2617 (DTEVPSEPHDSNDESNDDST). Composition is skewed to polar residues over residues 2445-2461 (SATTQATRQESSTTFVS) and 2496-2513 (NKSSPDPTSTLSNTVSYE). A glycan (N-linked (GlcNAc...) asparagine) is linked at Asn-2496. Ser-2608 carries the phosphoserine modification. Residue Thr-2617 is modified to Phosphothreonine. A glycan (N-linked (GlcNAc...) asparagine) is linked at Asn-2628. 3 O-linked (Xyl...) (chondroitin sulfate) serine glycosylation sites follow: Ser-2722, Ser-2723, and Ser-2767. Disordered regions lie at residues 2834 to 2856 (GSEASGHTEIPQPSALPGIDVGS) and 2881 to 2905 (EEYLHITEPPSLSPDTKLEPSEDDG). A compositionally biased stretch (basic and acidic residues) spans 2896–2905 (TKLEPSEDDG). N-linked (GlcNAc...) asparagine glycosylation occurs at Asn-2934. Residue Ser-2941 is glycosylated (O-linked (Xyl...) (chondroitin sulfate) serine). A glycan (N-linked (GlcNAc...) asparagine) is linked at Asn-3067. An EGF-like 1 domain is found at 3089–3125 (GPDRCKMNPCLNGGTCYPTETSYVCTCVPGYSGDQCE). 11 disulfides stabilise this stretch: Cys-3093-Cys-3104, Cys-3098-Cys-3113, Cys-3115-Cys-3124, Cys-3131-Cys-3142, Cys-3136-Cys-3151, Cys-3153-Cys-3162, Cys-3169-Cys-3180, Cys-3197-Cys-3289, Cys-3265-Cys-3281, Cys-3296-Cys-3339, and Cys-3325-Cys-3352. The region spanning 3127–3163 (DFDECHSNPCRNGATCVDGFNTFRCLCLPSYVGALCE) is the EGF-like 2; calcium-binding domain. Positions 3176–3290 (FQGQCYKYFA…CNYHLTYTCK (115 aa)) constitute a C-type lectin domain. Residues 3294 to 3354 (VACGQPPVVE…WAIPKITCMN (61 aa)) form the Sushi domain. Asn-3369 and Asn-3379 each carry an N-linked (GlcNAc...) asparagine glycan. Polar residues predominate over residues 3371 to 3380 (SSAKDNSINT). The segment at 3371–3396 (SSAKDNSINTSKHDHRWSRRWQESRR) is disordered.

This sequence belongs to the aggrecan/versican proteoglycan family. Interacts with FBLN1. In terms of processing, phosphorylated by FAM20C in the extracellular medium. Post-translationally, proteolytically cleaved by ADAMTS5 and ADAMTS15 in the pericellular matrix surrounding myoblasts, facilitating myoblast contact and fusion which is required for skeletal muscle development and regeneration. Detected in placenta (at protein level). Detected in cerebrospinal fluid, fibroblasts and urine (at protein level). Expressed in the retina (at protein level). Cerebral white matter and plasma. Isoform V0: Expressed in normal brain, gliomas, medulloblastomas, schwannomas, neurofibromas, and meningiomas. Isoform V1: Expressed in normal brain, gliomas, medulloblastomas, schwannomas, neurofibromas, and meningiomas. Isoform V2: Restricted to normal brain and gliomas. Isoform V3: Found in all these tissues except medulloblastomas.

The protein localises to the secreted. The protein resides in the extracellular space. It localises to the extracellular matrix. It is found in the cell projection. Its subcellular location is the cilium. The protein localises to the photoreceptor outer segment. The protein resides in the interphotoreceptor matrix. May play a role in intercellular signaling and in connecting cells with the extracellular matrix. May take part in the regulation of cell motility, growth and differentiation. Binds hyaluronic acid. This Homo sapiens (Human) protein is Versican core protein (VCAN).